The sequence spans 637 residues: DNA mismatch repair protein MutL (637 aa).

Belongs to the DNA mismatch repair MutL/HexB family.

In terms of biological role, this protein is involved in the repair of mismatches in DNA. It is required for dam-dependent methyl-directed DNA mismatch repair. May act as a 'molecular matchmaker', a protein that promotes the formation of a stable complex between two or more DNA-binding proteins in an ATP-dependent manner without itself being part of a final effector complex. This Actinobacillus succinogenes (strain ATCC 55618 / DSM 22257 / CCUG 43843 / 130Z) protein is DNA mismatch repair protein MutL.